The sequence spans 227 residues: MRRWLRLLVGLGCCWVTLAHAGNPYEDDDYYYYREDEPRQHGEPNYVAPPARQFRFPPLNNVSSYQASCVVKDGVLDAVWRVQGTFYPEKGIVARVGWSGRRGRKWGRLHAPECLVETTEAVFRLRQWVPTDLDHLTLHLVPCTKCKPMWCQPRYHIRYFSYGNSVDNLRRLHYEYRHLELGVVIAIQMAMVLLLGYVLARTVYRVSSAYYLRWHACVPQKCEKSLC.

An N-terminal signal peptide occupies residues 1–21 (MRRWLRLLVGLGCCWVTLAHA). Residues 22 to 178 (GNPYEDDDYY…LRRLHYEYRH (157 aa)) lie on the Lumenal side of the membrane. An N-linked (GlcNAc...) asparagine; by host glycan is attached at N61. The 95-residue stretch at 61–155 (NVSSYQASCV…CKPMWCQPRY (95 aa)) folds into the Ig-like H-type domain. C69 and C151 are disulfide-bonded. Residues 179 to 199 (LELGVVIAIQMAMVLLLGYVL) traverse the membrane as a helical segment. At 200-227 (ARTVYRVSSAYYLRWHACVPQKCEKSLC) the chain is on the cytoplasmic side.

The protein belongs to the cytomegalovirus US6 family.

It localises to the host endoplasmic reticulum membrane. Its subcellular location is the host Golgi apparatus membrane. The sequence is that of Membrane glycoprotein US8 (US8) from Human cytomegalovirus (strain Merlin) (HHV-5).